The primary structure comprises 249 residues: 5'-nucleotidase SurE (249 aa).

A divalent metal cation contacts are provided by D8, D9, S39, and N91.

The protein belongs to the SurE nucleotidase family. A divalent metal cation is required as a cofactor.

Its subcellular location is the cytoplasm. It catalyses the reaction a ribonucleoside 5'-phosphate + H2O = a ribonucleoside + phosphate. Its function is as follows. Nucleotidase that shows phosphatase activity on nucleoside 5'-monophosphates. This chain is 5'-nucleotidase SurE, found in Pseudomonas syringae pv. tomato (strain ATCC BAA-871 / DC3000).